We begin with the raw amino-acid sequence, 686 residues long: Rhophilin-2 (686 aa).

Residues 26 to 100 enclose the REM-1 domain; it reads NPLAQTGRSK…LEGLNISVGV (75 aa). The tract at residues 46 to 66 is interaction with Rho; it reads QILKAVRMRTGAENLLKVATN. In terms of domain architecture, BRO1 spans 111 to 502; sequence PLIPLGLKET…TDFFQKLGPL (392 aa). Residues 515–593 enclose the PDZ domain; sequence RGIHFTVEEG…EEVEMKVVSL (79 aa). Threonine 655 bears the Phosphothreonine mark.

The protein belongs to the RHPN family. As to quaternary structure, interacts with GTP-bound RhoA and RhoB. Interacts with both GTP- and GDP-bound RhoA. Interacts with KRT18.

It localises to the cytoplasm. The protein localises to the perinuclear region. Binds specifically to GTP-Rho. May function in a Rho pathway to limit stress fiber formation and/or increase the turnover of F-actin structures in the absence of high levels of RhoA activity. This chain is Rhophilin-2 (Rhpn2), found in Mus musculus (Mouse).